The chain runs to 121 residues: UPF0102 protein Syncc9902_1284 (121 aa).

This sequence belongs to the UPF0102 family.

The polypeptide is UPF0102 protein Syncc9902_1284 (Synechococcus sp. (strain CC9902)).